Reading from the N-terminus, the 339-residue chain is Biotin synthase (339 aa).

Residues 55 to 282 (NAVQLSTLLS…KAVVRLSAGR (228 aa)) enclose the Radical SAM core domain. [4Fe-4S] cluster is bound by residues C70, C74, and C77. [2Fe-2S] cluster is bound by residues C114, C145, C205, and R277.

This sequence belongs to the radical SAM superfamily. Biotin synthase family. In terms of assembly, homodimer. [4Fe-4S] cluster is required as a cofactor. [2Fe-2S] cluster serves as cofactor.

It catalyses the reaction (4R,5S)-dethiobiotin + (sulfur carrier)-SH + 2 reduced [2Fe-2S]-[ferredoxin] + 2 S-adenosyl-L-methionine = (sulfur carrier)-H + biotin + 2 5'-deoxyadenosine + 2 L-methionine + 2 oxidized [2Fe-2S]-[ferredoxin]. The protein operates within cofactor biosynthesis; biotin biosynthesis; biotin from 7,8-diaminononanoate: step 2/2. Its function is as follows. Catalyzes the conversion of dethiobiotin (DTB) to biotin by the insertion of a sulfur atom into dethiobiotin via a radical-based mechanism. The chain is Biotin synthase from Burkholderia ambifaria (strain MC40-6).